Consider the following 211-residue polypeptide: N-(5'-phosphoribosyl)anthranilate isomerase (211 aa).

The protein belongs to the TrpF family.

The catalysed reaction is N-(5-phospho-beta-D-ribosyl)anthranilate = 1-(2-carboxyphenylamino)-1-deoxy-D-ribulose 5-phosphate. The protein operates within amino-acid biosynthesis; L-tryptophan biosynthesis; L-tryptophan from chorismate: step 3/5. The protein is N-(5'-phosphoribosyl)anthranilate isomerase of Zymomonas mobilis subsp. mobilis (strain ATCC 31821 / ZM4 / CP4).